Consider the following 438-residue polypeptide: MNTNHIRTVKGGGSLQGILNVPGDKSISHRSLIIGSIAEGETNIKGFLYSDDPLSTADCLRKLGVNIPEIKKNQPFTIKGLGIDDFKEPEEILDCGNSGTTMRLLMGLLAGQEGRNFILTGDKSLNERPMGRVSKPLSLMGGIIHGRKNGTKAPISITGNKLKGCVIGTPVASAQVKSAILLAGLNASGTTSVIEPASSRDHTERMLKAFGADINIRGELGRNIVIKSGTNLTGQNILIPGDISSAAFWMIAASIVPESEIIIKNVGLNPTRTGILNVMNEMGCNYEILDKSTIAGEPIGSINIKYVSNLKPFKVEGDILPKLIDEIPILAVAACFCSGVSEIKDAKELRVKETDRLKVMATQLKKFGANILEKEDGLIINGESKFHSAEVDSETDHRVSMSLAIASLLAKGSSKIARAEASRVSYPTFWDDLEKLIN.

Residues Lys-25, Ser-26, and Arg-30 each contribute to the 3-phosphoshikimate site. Lys-25 is a binding site for phosphoenolpyruvate. Phosphoenolpyruvate is bound by residues Gly-99 and Arg-128. Positions 173, 175, 325, and 352 each coordinate 3-phosphoshikimate. Position 175 (Gln-175) interacts with phosphoenolpyruvate. The Proton acceptor role is filled by Asp-325. Residues Arg-356 and Arg-398 each coordinate phosphoenolpyruvate.

The protein belongs to the EPSP synthase family. In terms of assembly, monomer.

The protein localises to the cytoplasm. It carries out the reaction 3-phosphoshikimate + phosphoenolpyruvate = 5-O-(1-carboxyvinyl)-3-phosphoshikimate + phosphate. It participates in metabolic intermediate biosynthesis; chorismate biosynthesis; chorismate from D-erythrose 4-phosphate and phosphoenolpyruvate: step 6/7. In terms of biological role, catalyzes the transfer of the enolpyruvyl moiety of phosphoenolpyruvate (PEP) to the 5-hydroxyl of shikimate-3-phosphate (S3P) to produce enolpyruvyl shikimate-3-phosphate and inorganic phosphate. This chain is 3-phosphoshikimate 1-carboxyvinyltransferase, found in Prochlorococcus marinus subsp. pastoris (strain CCMP1986 / NIES-2087 / MED4).